A 247-amino-acid chain; its full sequence is Adenosine 5'-phosphosulfate reductase (247 aa).

Residues cysteine 133, cysteine 134, cysteine 216, and cysteine 219 each contribute to the [4Fe-4S] cluster site. The interval 222 to 247 (KPAPGSDPRSGRWAGASKTECGLHAS) is disordered. Cysteine 242 serves as the catalytic Nucleophile; cysteine thiosulfonate intermediate.

It belongs to the PAPS reductase family. CysH subfamily. [4Fe-4S] cluster is required as a cofactor.

The protein localises to the cytoplasm. It catalyses the reaction [thioredoxin]-disulfide + sulfite + AMP + 2 H(+) = adenosine 5'-phosphosulfate + [thioredoxin]-dithiol. Its pathway is sulfur metabolism; hydrogen sulfide biosynthesis; sulfite from sulfate. In terms of biological role, catalyzes the formation of sulfite from adenosine 5'-phosphosulfate (APS) using thioredoxin as an electron donor. In Rhodococcus erythropolis (strain PR4 / NBRC 100887), this protein is Adenosine 5'-phosphosulfate reductase.